We begin with the raw amino-acid sequence, 514 residues long: 1-pyrroline-5-carboxylate dehydrogenase (514 aa).

Active-site residues include Glu286 and Cys320.

It belongs to the aldehyde dehydrogenase family. RocA subfamily.

It carries out the reaction L-glutamate 5-semialdehyde + NAD(+) + H2O = L-glutamate + NADH + 2 H(+). It functions in the pathway amino-acid degradation; L-proline degradation into L-glutamate; L-glutamate from L-proline: step 2/2. In Staphylococcus aureus (strain MSSA476), this protein is 1-pyrroline-5-carboxylate dehydrogenase.